Reading from the N-terminus, the 68-residue chain is Conotoxin Pu5.5 (68 aa).

Residues 1–22 (MRCVPVFIILLVLIASAPSVDA) form the signal peptide. A propeptide spanning residues 23–49 (RPQTKDDALASFRDSIKRHLQTLLDAR) is cleaved from the precursor.

The protein belongs to the conotoxin T superfamily. Contains 2 disulfide bonds that can be either 'C1-C3, C2-C4' or 'C1-C4, C2-C3', since these disulfide connectivities have been observed for conotoxins with cysteine framework V (for examples, see AC P0DQQ7 and AC P81755). In terms of tissue distribution, expressed by the venom duct.

The protein localises to the secreted. The sequence is that of Conotoxin Pu5.5 from Conus pulicarius (Flea-bitten cone).